The chain runs to 142 residues: 3-hydroxyacyl-[acyl-carrier-protein] dehydratase FabZ (142 aa).

Histidine 47 is an active-site residue.

It belongs to the thioester dehydratase family. FabZ subfamily.

The protein localises to the cytoplasm. The catalysed reaction is a (3R)-hydroxyacyl-[ACP] = a (2E)-enoyl-[ACP] + H2O. Its function is as follows. Involved in unsaturated fatty acids biosynthesis. Catalyzes the dehydration of short chain beta-hydroxyacyl-ACPs and long chain saturated and unsaturated beta-hydroxyacyl-ACPs. This chain is 3-hydroxyacyl-[acyl-carrier-protein] dehydratase FabZ, found in Thermoanaerobacter sp. (strain X514).